A 99-amino-acid chain; its full sequence is HTH-type transcriptional regulator YgaV (99 aa).

The 93-residue stretch at 7–99 (LQASAEQAAA…IATLKNVYCP (93 aa)) folds into the HTH arsR-type domain. Positions 41–64 (AGELTRITGLSASATSQHLARMRD) form a DNA-binding region, H-T-H motif.

With respect to regulation, in the presence of H(2)S, two cysteine residues form an intramolecular tetrasulfide bond, which attenuates the binding of YgaV to DNA. Both unmodified YgaV and sulfide-modified YgaV can probably function as either a repressor or an activator. Binds heme, which may influence the DNA-binding affinity. In terms of biological role, transcriptional regulator that regulates large-scale gene expression in response to sulfide. May act as a global regulator responsible for redox homeostasis. It functions as both a repressor and an activator. In the absence of sulfide compounds, it negatively regulates many anaerobic respiratory genes, including formate, fumarate, lactate, nitrate and nitrite reductase genes. In the presence of hydrogen sulfide (H(2)S), YgaV activity is attenuated, leading to the expression of anaerobic respiratory and ROS scavenging genes, which contributes to redox homeostasis, reactive oxygen species (ROS) scavenging and antibiotic tolerance. It responds to H(2)O(2) scavenging and increases antibiotic tolerance under H(2)S-atmospheric conditions. It also negatively regulates its own expression by binding to the ygaVP promoter region. May also be involved in regulatory mechanisms that operate independently of sulfide. In Escherichia coli (strain K12), this protein is HTH-type transcriptional regulator YgaV (ygaV).